The following is a 177-amino-acid chain: Peptide methionine sulfoxide reductase MsrA (177 aa).

Cys15 is a catalytic residue.

This sequence belongs to the MsrA Met sulfoxide reductase family.

It carries out the reaction L-methionyl-[protein] + [thioredoxin]-disulfide + H2O = L-methionyl-(S)-S-oxide-[protein] + [thioredoxin]-dithiol. The enzyme catalyses [thioredoxin]-disulfide + L-methionine + H2O = L-methionine (S)-S-oxide + [thioredoxin]-dithiol. Functionally, has an important function as a repair enzyme for proteins that have been inactivated by oxidation. Catalyzes the reversible oxidation-reduction of methionine sulfoxide in proteins to methionine. In Listeria welshimeri serovar 6b (strain ATCC 35897 / DSM 20650 / CCUG 15529 / CIP 8149 / NCTC 11857 / SLCC 5334 / V8), this protein is Peptide methionine sulfoxide reductase MsrA.